A 457-amino-acid chain; its full sequence is Senescence-associated protein OSA15, chloroplastic (457 aa).

A chloroplast-targeting transit peptide spans 1-57 (MATRIPGTVAASGVYYNDQYRMPCKLKGIHCMALNCIPQKAKVRKCMNGYQSTFRFC).

The protein belongs to the ATA15/OSA15 family. As to expression, expressed in leaves (at protein level).

It localises to the plastid. It is found in the chloroplast. Functionally, may be involved in the regulation of leaf senescence. This chain is Senescence-associated protein OSA15, chloroplastic, found in Oryza sativa subsp. japonica (Rice).